Here is a 419-residue protein sequence, read N- to C-terminus: Phospho-N-acetylmuramoyl-pentapeptide-transferase (419 aa).

The next 10 membrane-spanning stretches (helical) occupy residues 22-42 (YVSF…TVIG), 72-92 (TPTM…LLLA), 99-119 (ILLM…DDYI), 135-155 (IIGQ…NPAV), 208-228 (VLFG…FISN), 238-258 (GLAT…AYVS), 278-298 (LTIF…YNAY), 303-323 (FMGD…ALII), 328-348 (LLPI…IQVF), and 396-416 (KITV…IATL).

It belongs to the glycosyltransferase 4 family. MraY subfamily. Mg(2+) is required as a cofactor.

It is found in the cell inner membrane. The catalysed reaction is UDP-N-acetyl-alpha-D-muramoyl-L-alanyl-gamma-D-glutamyl-meso-2,6-diaminopimeloyl-D-alanyl-D-alanine + di-trans,octa-cis-undecaprenyl phosphate = di-trans,octa-cis-undecaprenyl diphospho-N-acetyl-alpha-D-muramoyl-L-alanyl-D-glutamyl-meso-2,6-diaminopimeloyl-D-alanyl-D-alanine + UMP. It functions in the pathway cell wall biogenesis; peptidoglycan biosynthesis. In terms of biological role, catalyzes the initial step of the lipid cycle reactions in the biosynthesis of the cell wall peptidoglycan: transfers peptidoglycan precursor phospho-MurNAc-pentapeptide from UDP-MurNAc-pentapeptide onto the lipid carrier undecaprenyl phosphate, yielding undecaprenyl-pyrophosphoryl-MurNAc-pentapeptide, known as lipid I. This is Phospho-N-acetylmuramoyl-pentapeptide-transferase from Porphyromonas gingivalis (strain ATCC 33277 / DSM 20709 / CIP 103683 / JCM 12257 / NCTC 11834 / 2561).